The chain runs to 137 residues: Large ribosomal subunit protein uL16 (137 aa).

The protein belongs to the universal ribosomal protein uL16 family. Part of the 50S ribosomal subunit.

In terms of biological role, binds 23S rRNA and is also seen to make contacts with the A and possibly P site tRNAs. In Legionella pneumophila (strain Paris), this protein is Large ribosomal subunit protein uL16.